The sequence spans 569 residues: Proline--tRNA ligase (569 aa).

This sequence belongs to the class-II aminoacyl-tRNA synthetase family. ProS type 1 subfamily. Homodimer.

The protein localises to the cytoplasm. It catalyses the reaction tRNA(Pro) + L-proline + ATP = L-prolyl-tRNA(Pro) + AMP + diphosphate. Functionally, catalyzes the attachment of proline to tRNA(Pro) in a two-step reaction: proline is first activated by ATP to form Pro-AMP and then transferred to the acceptor end of tRNA(Pro). As ProRS can inadvertently accommodate and process non-cognate amino acids such as alanine and cysteine, to avoid such errors it has two additional distinct editing activities against alanine. One activity is designated as 'pretransfer' editing and involves the tRNA(Pro)-independent hydrolysis of activated Ala-AMP. The other activity is designated 'posttransfer' editing and involves deacylation of mischarged Ala-tRNA(Pro). The misacylated Cys-tRNA(Pro) is not edited by ProRS. The chain is Proline--tRNA ligase from Campylobacter hominis (strain ATCC BAA-381 / DSM 21671 / CCUG 45161 / LMG 19568 / NCTC 13146 / CH001A).